A 315-amino-acid polypeptide reads, in one-letter code: L-lactate dehydrogenase (315 aa).

Residues Val-16, Asp-37, and Gly-81–Ala-82 each bind NAD(+). Substrate-binding positions include Gln-84, Arg-90, and Asn-122–Asp-125. NAD(+) contacts are provided by residues Val-120 to Asn-122 and Ser-145. Asp-150–Arg-153 contributes to the substrate binding site. Residues Arg-155 and His-170 each coordinate beta-D-fructose 1,6-bisphosphate. Catalysis depends on His-177, which acts as the Proton acceptor. Tyr-224 is subject to Phosphotyrosine. Thr-233 is a binding site for substrate.

Belongs to the LDH/MDH superfamily. LDH family. Homotetramer.

It localises to the cytoplasm. The catalysed reaction is (S)-lactate + NAD(+) = pyruvate + NADH + H(+). It functions in the pathway fermentation; pyruvate fermentation to lactate; (S)-lactate from pyruvate: step 1/1. With respect to regulation, allosterically activated by fructose 1,6-bisphosphate (FBP). Catalyzes the conversion of lactate to pyruvate. This is L-lactate dehydrogenase from Treponema denticola (strain ATCC 35405 / DSM 14222 / CIP 103919 / JCM 8153 / KCTC 15104).